The sequence spans 145 residues: Small ribosomal subunit protein uS9 (145 aa).

The protein belongs to the universal ribosomal protein uS9 family.

It is found in the cytoplasm. In Fritillaria agrestis (Stinkbells), this protein is Small ribosomal subunit protein uS9 (RPS16).